Reading from the N-terminus, the 746-residue chain is tRNA(Met) cytidine acetyltransferase TmcA (746 aa).

The disordered stretch occupies residues 181–200 (ARAETGGNPPSPGDSACRTE). ATP is bound by residues Q202, 228–237 (GRGKSAALGI), and R370. Residues 405-617 (VAVERLDRDA…VHLPHQLADP (213 aa)) enclose the N-acetyltransferase domain. Residues 517–519 (IAV), 524–530 (QGQGLGT), E557, and R564 each bind acetyl-CoA.

Belongs to the RNA cytidine acetyltransferase family. TmcA subfamily.

It is found in the cytoplasm. The enzyme catalyses cytidine(34) in elongator tRNA(Met) + acetyl-CoA + ATP + H2O = N(4)-acetylcytidine(34) in elongator tRNA(Met) + ADP + phosphate + CoA + H(+). In terms of biological role, catalyzes the formation of N(4)-acetylcytidine (ac(4)C) at the wobble position of tRNA(Met), by using acetyl-CoA as an acetyl donor and ATP (or GTP). This chain is tRNA(Met) cytidine acetyltransferase TmcA, found in Nitrosococcus halophilus (strain Nc4).